Reading from the N-terminus, the 531-residue chain is Outer dynein arm-docking complex subunit 4 (531 aa).

TPR repeat units follow at residues 15–48, 50–82, and 83–116; these read FSTY…QPEE, NCLV…ENDF, and FKGL…RPEF. Residues 161-185 form a disordered region; the sequence is KQKAQVKVQKKDSKQQKKVDPERSQ. The segment covering 169-185 has biased composition (basic and acidic residues); that stretch reads QKKDSKQQKKVDPERSQ. TPR repeat units lie at residues 275-307, 320-353, 360-393, 397-430, and 437-470; these read VKSL…VERW, GSLH…AEKY, SRAL…ANSS, TWLY…ADAA, and LNAC…ARLL. Residues 487 to 531 form a disordered region; the sequence is KQGMEEQQESEQNNDENDNLRADGNTARDEEEEDVHVQRTEEDEG. Residues 492-503 are compositionally biased toward acidic residues; it reads EQQESEQNNDEN. Residues 521–531 show a composition bias toward basic and acidic residues; sequence VHVQRTEEDEG.

As to quaternary structure, component of the outer dynein arm-docking complex. In terms of tissue distribution, in the mucociliary epithelium, specifically expressed in ciliated cells.

The protein localises to the cytoplasm. It is found in the cytoskeleton. Its subcellular location is the cilium axoneme. Its function is as follows. Component of the outer dynein arm-docking complex (ODA-DC) that mediates outer dynein arms (ODA) binding onto the doublet microtubule. Plays an essential role for the assembly of ODA-DC and in the docking of ODA in ciliary axoneme. Functionally, required for the docking of the outer dynein arm to cilia, hence plays an essential role in cilia motility. The sequence is that of Outer dynein arm-docking complex subunit 4 (odad4) from Xenopus laevis (African clawed frog).